Here is a 426-residue protein sequence, read N- to C-terminus: 3-phosphoshikimate 1-carboxyvinyltransferase (426 aa).

Residues K22, S23, and R27 each contribute to the 3-phosphoshikimate site. K22 is a phosphoenolpyruvate binding site. The phosphoenolpyruvate site is built by G96 and R124. 3-phosphoshikimate-binding residues include S170, S171, Q172, S198, D314, N337, and K341. Residue Q172 participates in phosphoenolpyruvate binding. D314 functions as the Proton acceptor in the catalytic mechanism. Positions 345, 387, and 412 each coordinate phosphoenolpyruvate.

It belongs to the EPSP synthase family. As to quaternary structure, monomer.

The protein localises to the cytoplasm. It carries out the reaction 3-phosphoshikimate + phosphoenolpyruvate = 5-O-(1-carboxyvinyl)-3-phosphoshikimate + phosphate. It participates in metabolic intermediate biosynthesis; chorismate biosynthesis; chorismate from D-erythrose 4-phosphate and phosphoenolpyruvate: step 6/7. Catalyzes the transfer of the enolpyruvyl moiety of phosphoenolpyruvate (PEP) to the 5-hydroxyl of shikimate-3-phosphate (S3P) to produce enolpyruvyl shikimate-3-phosphate and inorganic phosphate. The polypeptide is 3-phosphoshikimate 1-carboxyvinyltransferase (Aliivibrio fischeri (strain ATCC 700601 / ES114) (Vibrio fischeri)).